The chain runs to 820 residues: LPS-assembly protein LptD (820 aa).

The disordered stretch occupies residues 1–27 (MDLSSLPDPLRPTHSRLPARRRDRAEP). Basic residues predominate over residues 13–22 (THSRLPARRR).

It belongs to the LptD family. In terms of assembly, component of the lipopolysaccharide transport and assembly complex. Interacts with LptE and LptA.

Together with LptE, is involved in the assembly of lipopolysaccharide (LPS) at the surface of the outer membrane. The chain is LPS-assembly protein LptD from Paracidovorax citrulli (strain AAC00-1) (Acidovorax citrulli).